Reading from the N-terminus, the 194-residue chain is Imidazoleglycerol-phosphate dehydratase (194 aa).

Belongs to the imidazoleglycerol-phosphate dehydratase family.

The protein resides in the cytoplasm. It catalyses the reaction D-erythro-1-(imidazol-4-yl)glycerol 3-phosphate = 3-(imidazol-4-yl)-2-oxopropyl phosphate + H2O. It functions in the pathway amino-acid biosynthesis; L-histidine biosynthesis; L-histidine from 5-phospho-alpha-D-ribose 1-diphosphate: step 6/9. The protein is Imidazoleglycerol-phosphate dehydratase of Streptococcus gordonii (strain Challis / ATCC 35105 / BCRC 15272 / CH1 / DL1 / V288).